Reading from the N-terminus, the 321-residue chain is 26S proteasome non-ATPase regulatory subunit 7 (321 aa).

The MPN domain occupies 9–144; that stretch reads VVVHPLVLLS…TEAYISVEEV (136 aa). Residue Lys-180 forms a Glycyl lysine isopeptide (Lys-Gly) (interchain with G-Cter in ubiquitin) linkage. Residues Lys-204, Lys-214, Lys-313, and Lys-314 each carry the N6-acetyllysine modification. The disordered stretch occupies residues 281 to 321; it reads ANRDAEKKEGQEKEESKKERKDDKEKEKSDAAKKEEKKEKK.

This sequence belongs to the peptidase M67A family. In terms of assembly, component of the 19S proteasome regulatory particle complex. The 26S proteasome consists of a 20S core particle (CP) and two 19S regulatory subunits (RP). The regulatory particle is made of a lid composed of 9 subunits including PSMD7, a base containing 6 ATPases and few additional components. Within the complex, PSMD7 interacts with subunit PSMD4 through their respective MPN domain. Interacts with TRIM5.

Its function is as follows. Component of the 26S proteasome, a multiprotein complex involved in the ATP-dependent degradation of ubiquitinated proteins. This complex plays a key role in the maintenance of protein homeostasis by removing misfolded or damaged proteins, which could impair cellular functions, and by removing proteins whose functions are no longer required. Therefore, the proteasome participates in numerous cellular processes, including cell cycle progression, apoptosis, or DNA damage repair. The protein is 26S proteasome non-ATPase regulatory subunit 7 (Psmd7) of Mus musculus (Mouse).